Here is a 747-residue protein sequence, read N- to C-terminus: Ferrichrome outer membrane transporter/phage receptor (747 aa).

The first 33 residues, 1 to 33, serve as a signal peptide directing secretion; it reads MARSKTAQPKHSLRKIAVVVATAVSGMSVYAQA. Residues 34-192 lie on the Periplasmic side of the membrane; that stretch reads AVEPKEDTIT…NMVSKRPTTE (159 aa). The TonB box motif lies at 40-47; sequence DTITVTAA. One can recognise a TBDR plug domain in the interval 75-187; it reads PIQKVPQSIS…PGGLLNMVSK (113 aa). Ferrichrome contacts are provided by residues arginine 114, glutamine 133, and 148–149; that span reads FY. Residues 192–747 enclose the TBDR beta-barrel domain; the sequence is EPLKEVQFKA…QVVATATFRF (556 aa). A beta stranded membrane pass occupies residues 193-201; it reads PLKEVQFKA. Topologically, residues 202–206 are extracellular; the sequence is GTDSL. A beta stranded membrane pass occupies residues 207–215; it reads FQTGFDFSD. Residues 216 to 222 are Periplasmic-facing; sequence SLDDDGV. A beta stranded membrane pass occupies residues 223 to 231; sequence YSYRLTGLA. The Extracellular segment spans residues 232 to 245; the sequence is RSANAQQKGSEEQR. Residues 246-255 traverse the membrane as a beta stranded segment; the sequence is YAIAPAFTWR. At 256–259 the chain is on the periplasmic side; sequence PDDK. Residues 260–268 form a beta stranded membrane-spanning segment; the sequence is TNFTFLSYF. Residues 269–312 lie on the Extracellular side of the membrane; it reads QNEPETGYYGWLPKEGTVEPLPNGKRLPTDFNEGAKNNTYSRNE. Residue 277 to 279 participates in ferrichrome binding; that stretch reads YGW. Residues 313–321 form a beta stranded membrane-spanning segment; sequence KMVGYSFDH. Residues 322 to 326 lie on the Periplasmic side of the membrane; it reads EFNDT. The chain crosses the membrane as a beta stranded span at residues 327–335; sequence FTVRQNLRF. Topologically, residues 336-387 are extracellular; that stretch reads AENKTSQNSVYGYGVCSDPANAYSKQCAALAPADKGHYLARKYVVDDEKLQN. 346-348 is a ferrichrome binding site; it reads YGY. Cysteines 351 and 362 form a disulfide. A beta stranded transmembrane segment spans residues 388-396; sequence FSVDTQLQS. Residues 397-404 lie on the Periplasmic side of the membrane; it reads KFATGDID. A beta stranded membrane pass occupies residues 405-413; sequence HTLLTGVDF. Residues 414-464 lie on the Extracellular side of the membrane; the sequence is MRMRNDINAWFGYDDSVPLLNLYNPVNTDFDFNAKDPANSGPYRILNKQKQ. Position 424 (phenylalanine 424) interacts with ferrichrome. The chain crosses the membrane as a beta stranded span at residues 465-473; the sequence is TGVYVQDQA. At 474–477 the chain is on the periplasmic side; sequence QWDK. The chain crosses the membrane as a beta stranded span at residues 478-486; it reads VLVTLGGRY. Over 487–508 the chain is Extracellular; the sequence is DWADQESLNRVAGTTDKRDDKQ. The chain crosses the membrane as a beta stranded span at residues 509-517; sequence FTWRGGVNY. Topologically, residues 518–522 are periplasmic; it reads LFDNG. Residues 523–531 traverse the membrane as a beta stranded segment; that stretch reads VTPYFSYSE. The Extracellular portion of the chain corresponds to 532–551; it reads SFEPSSQVGKDGNIFAPSKG. A beta stranded membrane pass occupies residues 552 to 560; it reads KQYEVGVKY. The Periplasmic segment spans residues 561-565; it reads VPEDR. Residues 566-574 traverse the membrane as a beta stranded segment; the sequence is PIVVTGAVY. Topologically, residues 575–601 are extracellular; it reads NLTKTNNLMADPEGSFFSVEGGEIRAR. The chain crosses the membrane as a beta stranded span at residues 602–610; sequence GVEIEAKAA. Over 611–613 the chain is Periplasmic; the sequence is LSA. A beta stranded membrane pass occupies residues 614–622; it reads SVNVVGSYT. Residues 623 to 645 are Extracellular-facing; the sequence is YTDAEYTTDTTYKGNTPAQVPKH. The chain crosses the membrane as a beta stranded span at residues 646 to 654; the sequence is MASLWADYT. At 655–661 the chain is on the periplasmic side; the sequence is FFDGPLS. Residues 662 to 670 form a beta stranded membrane-spanning segment; that stretch reads GLTLGTGGR. At 671–689 the chain is on the extracellular side; that stretch reads YTGSSYGDPANSFKVGSYT. A beta stranded transmembrane segment spans residues 690–698; the sequence is VVDALVRYD. At 699 to 705 the chain is on the periplasmic side; it reads LARVGMA. A beta stranded membrane pass occupies residues 706-714; it reads GSNVALHVN. Residues 715-737 are Extracellular-facing; the sequence is NLFDREYVASCFNTYGCFWGAER. Cysteine 725 and cysteine 731 are disulfide-bonded. The TonB C-terminal box motif lies at 730 to 747; the sequence is GCFWGAERQVVATATFRF. Ferrichrome is bound at residue alanine 735. The chain crosses the membrane as a beta stranded span at residues 738–746; the sequence is QVVATATFR. Position 747 (phenylalanine 747) is a topological domain, periplasmic.

Belongs to the TonB-dependent receptor family. As to quaternary structure, monomer. Interacts with TonB. Interacts with Escherichia phage T5 receptor-binding protein pb5 (RBP-pb5); this interaction is necessary for the entry of the viral genome into the host cell.

Its subcellular location is the cell outer membrane. Binding of ferrichrome or colicin M enhances the interaction between FhuA and TonB. TonB activates FhuA through interaction with the beta-barrel. Functionally, involved in the uptake of iron in complex with ferrichrome, a hydroxamate-type siderophore. Binds and transports ferrichrome-iron across the outer membrane. In addition to its role in ferrichrome-iron transport, transports the antibiotic albomycin, which is a structural analog of ferrichrome, and acts as a receptor for colicin M, microcin J25 and bacteriophages T1, T5, phi80 and UC-1. The energy source, which is required for all FhuA functions except infection by phage T5, is provided by the inner membrane TonB system. The chain is Ferrichrome outer membrane transporter/phage receptor from Escherichia coli (strain K12).